Consider the following 195-residue polypeptide: Interferon tau (195 aa).

Positions 1 to 23 are cleaved as a signal peptide; sequence MAFVLSLRMALVLVSYCPGGSLG. 2 disulfides stabilise this stretch: cysteine 24/cysteine 122 and cysteine 52/cysteine 162. An N-linked (GlcNAc...) asparagine glycan is attached at asparagine 101.

Belongs to the alpha/beta interferon family. IFN-alphaII subfamily. In terms of tissue distribution, constitutively and exclusively expressed in the mononuclear cells of the extraembryonic trophectoderm.

Its subcellular location is the secreted. Its function is as follows. Paracrine hormone primarily responsible for maternal recognition of pregnancy. Interacts with endometrial receptors, probably type I interferon receptors, and blocks estrogen receptor expression, preventing the estrogen-induced increase in oxytocin receptor expression in the endometrium. This results in the suppression of the pulsatile endometrial release of the luteolytic hormone prostaglandin F2-alpha, hindering the regression of the corpus luteum (luteolysis) and therefore a return to ovarian cyclicity. This, and a possible direct effect of IFN-tau on prostaglandin synthesis, leads in turn to continued ovarian progesterone secretion, which stimulates the secretion by the endometrium of the nutrients required for the growth of the conceptus. In summary, displays particularly high antiviral and antiproliferative potency concurrently with particular weak cytotoxicity, high antiluteolytic activity and immunomodulatory properties. In contrast with other IFNs, IFN-tau is not virally inducible. The sequence is that of Interferon tau (IFNT) from Ovibos moschatus (Muskox).